The chain runs to 112 residues: MSLRAFMLCVCLLLQSVGARPASELQNLERLLQDQLSSTEHPEEDRLDRTREEPQLGGSSSREAADESALTRLFADLLRTSKRSWGRYKKGGMRSCFGVRLERIGSFSGLGC.

The signal sequence occupies residues 1-19 (MSLRAFMLCVCLLLQSVGA). Positions 20-90 (RPASELQNLE…SKRSWGRYKK (71 aa)) are excised as a propeptide. The disordered stretch occupies residues 33–67 (QDQLSSTEHPEEDRLDRTREEPQLGGSSSREAADE). Residues 40–54 (EHPEEDRLDRTREEP) are compositionally biased toward basic and acidic residues. An intrachain disulfide couples C96 to C112.

The protein belongs to the natriuretic peptide family. As to expression, spinal cord, kidney, ovary, heart and spleen, and to a lower extent in brain and liver.

The protein resides in the secreted. Its function is as follows. Exhibits natriuretic and vasodepressant activity. Has cGMP-stimulating activity. May help to regulate body fluid homeostasis in a variety of aquatic environments. In Oryzias latipes (Japanese rice fish), this protein is C-type natriuretic peptide 3.